The primary structure comprises 190 residues: Xanthine phosphoribosyltransferase (190 aa).

Xanthine is bound by residues Leu20 and Asn27. Residue Ala128–Ala132 participates in 5-phospho-alpha-D-ribose 1-diphosphate binding. Residue Lys156 participates in xanthine binding.

The protein belongs to the purine/pyrimidine phosphoribosyltransferase family. Xpt subfamily. Homodimer.

The protein resides in the cytoplasm. The enzyme catalyses XMP + diphosphate = xanthine + 5-phospho-alpha-D-ribose 1-diphosphate. Its pathway is purine metabolism; XMP biosynthesis via salvage pathway; XMP from xanthine: step 1/1. Converts the preformed base xanthine, a product of nucleic acid breakdown, to xanthosine 5'-monophosphate (XMP), so it can be reused for RNA or DNA synthesis. This Pseudomonas fluorescens (strain Pf0-1) protein is Xanthine phosphoribosyltransferase.